A 210-amino-acid polypeptide reads, in one-letter code: Small ribosomal subunit protein uS4 (210 aa).

Residues R99 to V170 enclose the S4 RNA-binding domain.

The protein belongs to the universal ribosomal protein uS4 family. Part of the 30S ribosomal subunit. Contacts protein S5. The interaction surface between S4 and S5 is involved in control of translational fidelity.

One of the primary rRNA binding proteins, it binds directly to 16S rRNA where it nucleates assembly of the body of the 30S subunit. Functionally, with S5 and S12 plays an important role in translational accuracy. The polypeptide is Small ribosomal subunit protein uS4 (Desulfotalea psychrophila (strain LSv54 / DSM 12343)).